The primary structure comprises 188 residues: Large ribosomal subunit protein eL18B (188 aa).

The disordered stretch occupies residues 153–188; it reads GKAPGTPHSRTKPYVLSKGRKFERARGRRASRGYKN. Over residues 178-188 the composition is skewed to basic residues; the sequence is RGRRASRGYKN.

The protein belongs to the eukaryotic ribosomal protein eL18 family. Component of the large ribosomal subunit.

The protein resides in the cytoplasm. It is found in the cytosol. Its subcellular location is the rough endoplasmic reticulum. Component of the large ribosomal subunit. The ribosome is a large ribonucleoprotein complex responsible for the synthesis of proteins in the cell. The sequence is that of Large ribosomal subunit protein eL18B (rpl18-b) from Xenopus laevis (African clawed frog).